Here is a 534-residue protein sequence, read N- to C-terminus: Protein tweety homolog 2 (534 aa).

The Extracellular segment spans residues 1–44 (MQAARVDYIAPWWVVWLHSVPHVGLRLQPVNSTFSPGDESYQES). N31 carries N-linked (GlcNAc...) asparagine glycosylation. A helical membrane pass occupies residues 45 to 65 (LLFLGLVAAVCLGLNLIFLVA). The Cytoplasmic segment spans residues 66-87 (YLVCACHCRRDDAVQTKQHHSC). Residues 88–108 (CITWTAVVAGLICCAAVGVGF) traverse the membrane as a helical segment. The Extracellular portion of the chain corresponds to 109–213 (YGNSETNDGA…QTGYVEYYRW (105 aa)). Ca(2+) is bound by residues E113 and D116. An N-linked (GlcNAc) asparagine glycan is attached at N129. Residues 164–166 (RGD) carry the RGD motif. The residue at position 199 (T199) is a Phosphothreonine. The chain crosses the membrane as a helical span at residues 214-234 (LSYLLLFILDLVICLIACLGL). Topologically, residues 235 to 240 (AKRSKC) are cytoplasmic. Residues 241–261 (LLASMLCCGALSLLLSWASLA) form a helical membrane-spanning segment. The Extracellular portion of the chain corresponds to 262-388 (ADGSAAVATS…AGICYDGLQG (127 aa)). Cystine bridges form between C274–C382 and C300–C367. Residue N283 is glycosylated (N-linked (GlcNAc...) asparagine). N-linked (GlcNAc) asparagine glycosylation is present at N352. A helical membrane pass occupies residues 389–409 (LLYLGLFSFLAALAFSTMICA). The Cytoplasmic segment spans residues 410-534 (GPRAWKHFTT…LRHYGNQFPA (125 aa)). S504 is subject to Phosphoserine. Positions 506–509 (PPTY) match the PY-motif; mediates interaction with NEDD4L motif.

This sequence belongs to the tweety family. As to quaternary structure, homodimer. Forms cis-homodimers in the presence of Ca(+2) and forms monomers and trans-dimers in the absence of Ca(2+). Interacts with NEDD4L. In terms of processing, N- Glycosylated. Contains high-mannose, hybrid and complex oligosaccharides. Ubiquitinated by NEDD4L, leading to its proteasomal degradation. In terms of tissue distribution, expressed at higher level in brain and testis and at lower levels in heart, ovary, spleen and peripheral blood leukocytes. Up-regulated in 13 of 16 renal cell carcinoma samples examined. Up-regulated in colon carcinoma.

It is found in the cell membrane. The catalysed reaction is chloride(in) = chloride(out). The enzyme catalyses L-glutamate(out) = L-glutamate(in). In terms of biological role, calcium-independent, swelling-dependent volume-regulated anion channel (VRAC-swell) which plays a pivotal role in the process of regulatory volume decrease (RVD) in the brain through the efflux of anions like chloride and organic osmolytes like glutamate. Probable large-conductance Ca(2+)-activated chloride channel. In Homo sapiens (Human), this protein is Protein tweety homolog 2 (TTYH2).